Consider the following 126-residue polypeptide: Profilin-1A (126 aa).

The segment at 2-36 is actin binding; sequence SWQTYVDTNLVGTGAVTQAAILGLDGNTWATSAGF. K104 carries the post-translational modification N6,N6,N6-trimethyllysine.

The protein belongs to the profilin family. In terms of assembly, occurs in many kinds of cells as a complex with monomeric actin in a 1:1 ratio.

It localises to the cytoplasm. The protein resides in the cytoskeleton. Functionally, binds to actin and affects the structure of the cytoskeleton. At high concentrations, profilin prevents the polymerization of actin, whereas it enhances it at low concentrations. By binding to PIP2, it inhibits the formation of IP3 and DG. The polypeptide is Profilin-1A (Acanthamoeba castellanii (Amoeba)).